A 422-amino-acid chain; its full sequence is Enolase (422 aa).

Position 41 (serine 41) interacts with Mg(2+). Glutamate 163 contributes to the (2R)-2-phosphoglycerate binding site. Glutamate 204 functions as the Proton donor in the catalytic mechanism. Residues aspartate 241, glutamate 284, and aspartate 311 each contribute to the Mg(2+) site. Lysine 336 serves as the catalytic Proton acceptor. (2R)-2-phosphoglycerate-binding residues include arginine 365, serine 366, and lysine 387.

Belongs to the enolase family. In terms of assembly, homodimer. Component of the RNA degradosome, a multiprotein complex involved in RNA processing and mRNA degradation. Mg(2+) is required as a cofactor.

It localises to the cytoplasm. The protein resides in the secreted. The protein localises to the cell surface. The catalysed reaction is (2R)-2-phosphoglycerate = phosphoenolpyruvate + H2O. Its pathway is carbohydrate degradation; glycolysis; pyruvate from D-glyceraldehyde 3-phosphate: step 4/5. Its function is as follows. Catalyzes the reversible conversion of 2-phosphoglycerate (2-PG) into phosphoenolpyruvate (PEP). It is essential for the degradation of carbohydrates via glycolysis. This is Enolase from Legionella pneumophila subsp. pneumophila (strain Philadelphia 1 / ATCC 33152 / DSM 7513).